Consider the following 286-residue polypeptide: Elongation factor Ts (286 aa).

The involved in Mg(2+) ion dislocation from EF-Tu stretch occupies residues T82–V85.

The protein belongs to the EF-Ts family.

The protein resides in the cytoplasm. In terms of biological role, associates with the EF-Tu.GDP complex and induces the exchange of GDP to GTP. It remains bound to the aminoacyl-tRNA.EF-Tu.GTP complex up to the GTP hydrolysis stage on the ribosome. The sequence is that of Elongation factor Ts from Hahella chejuensis (strain KCTC 2396).